Consider the following 448-residue polypeptide: Probable glycine dehydrogenase (decarboxylating) subunit 1 (448 aa).

This sequence belongs to the GcvP family. N-terminal subunit subfamily. In terms of assembly, the glycine cleavage system is composed of four proteins: P, T, L and H. In this organism, the P 'protein' is a heterodimer of two subunits.

It carries out the reaction N(6)-[(R)-lipoyl]-L-lysyl-[glycine-cleavage complex H protein] + glycine + H(+) = N(6)-[(R)-S(8)-aminomethyldihydrolipoyl]-L-lysyl-[glycine-cleavage complex H protein] + CO2. The glycine cleavage system catalyzes the degradation of glycine. The P protein binds the alpha-amino group of glycine through its pyridoxal phosphate cofactor; CO(2) is released and the remaining methylamine moiety is then transferred to the lipoamide cofactor of the H protein. The polypeptide is Probable glycine dehydrogenase (decarboxylating) subunit 1 (Parvibaculum lavamentivorans (strain DS-1 / DSM 13023 / NCIMB 13966)).